We begin with the raw amino-acid sequence, 497 residues long: Glutamyl-tRNA(Gln) amidotransferase subunit A (497 aa).

Active-site charge relay system residues include Lys91 and Ser166. A disordered region spans residues 143–171 (SSTENSAYGPTHNPWDLERTAGGSGGGSS). Ser190 serves as the catalytic Acyl-ester intermediate.

It belongs to the amidase family. GatA subfamily. As to quaternary structure, heterotrimer of A, B and C subunits.

The catalysed reaction is L-glutamyl-tRNA(Gln) + L-glutamine + ATP + H2O = L-glutaminyl-tRNA(Gln) + L-glutamate + ADP + phosphate + H(+). Allows the formation of correctly charged Gln-tRNA(Gln) through the transamidation of misacylated Glu-tRNA(Gln) in organisms which lack glutaminyl-tRNA synthetase. The reaction takes place in the presence of glutamine and ATP through an activated gamma-phospho-Glu-tRNA(Gln). In Corynebacterium glutamicum (strain ATCC 13032 / DSM 20300 / JCM 1318 / BCRC 11384 / CCUG 27702 / LMG 3730 / NBRC 12168 / NCIMB 10025 / NRRL B-2784 / 534), this protein is Glutamyl-tRNA(Gln) amidotransferase subunit A.